Consider the following 112-residue polypeptide: Protein Churchill (112 aa).

Residues Cys-2, Cys-5, Cys-30, Cys-33, His-59, Cys-61, Cys-64, His-66, His-71, Cys-88, and Cys-91 each coordinate Zn(2+).

The protein belongs to the Churchill family.

Functionally, transcriptional activator that mediates FGF signaling during neural development. Plays a role in the regulation of cell movement. Does not bind DNA by itself. This Bos taurus (Bovine) protein is Protein Churchill (CHURC1).